A 357-amino-acid polypeptide reads, in one-letter code: D-alanine--D-alanine ligase A (357 aa).

The ATP-grasp domain maps to 143-348; that stretch reads KRLLREAGLA…YSKVIDVLIE (206 aa). 171–226 contributes to the ATP binding site; it reads AGALGLPFFAKPARQGSSFGVSKVHDRDGFEQAVETALRYDSKALIEEFVDGREIE. Positions 302, 315, and 317 each coordinate Mg(2+).

The protein belongs to the D-alanine--D-alanine ligase family. Requires Mg(2+) as cofactor. The cofactor is Mn(2+).

The protein resides in the cytoplasm. The enzyme catalyses 2 D-alanine + ATP = D-alanyl-D-alanine + ADP + phosphate + H(+). It participates in cell wall biogenesis; peptidoglycan biosynthesis. Cell wall formation. This is D-alanine--D-alanine ligase A from Mesorhizobium japonicum (strain LMG 29417 / CECT 9101 / MAFF 303099) (Mesorhizobium loti (strain MAFF 303099)).